A 512-amino-acid chain; its full sequence is Maturase K (512 aa).

The protein belongs to the intron maturase 2 family. MatK subfamily.

It localises to the plastid. Its subcellular location is the chloroplast. Functionally, usually encoded in the trnK tRNA gene intron. Probably assists in splicing its own and other chloroplast group II introns. This chain is Maturase K, found in Lilium henryi (Henry's lily).